The sequence spans 330 residues: Lipoyl synthase (330 aa).

Residues Cys77, Cys82, Cys88, Cys103, Cys107, Cys110, and Ser317 each contribute to the [4Fe-4S] cluster site. The Radical SAM core domain occupies 89–306 (FNHGTATFMI…RSEAEKMGFE (218 aa)).

This sequence belongs to the radical SAM superfamily. Lipoyl synthase family. Requires [4Fe-4S] cluster as cofactor.

It is found in the cytoplasm. It catalyses the reaction [[Fe-S] cluster scaffold protein carrying a second [4Fe-4S](2+) cluster] + N(6)-octanoyl-L-lysyl-[protein] + 2 oxidized [2Fe-2S]-[ferredoxin] + 2 S-adenosyl-L-methionine + 4 H(+) = [[Fe-S] cluster scaffold protein] + N(6)-[(R)-dihydrolipoyl]-L-lysyl-[protein] + 4 Fe(3+) + 2 hydrogen sulfide + 2 5'-deoxyadenosine + 2 L-methionine + 2 reduced [2Fe-2S]-[ferredoxin]. Its pathway is protein modification; protein lipoylation via endogenous pathway; protein N(6)-(lipoyl)lysine from octanoyl-[acyl-carrier-protein]: step 2/2. Catalyzes the radical-mediated insertion of two sulfur atoms into the C-6 and C-8 positions of the octanoyl moiety bound to the lipoyl domains of lipoate-dependent enzymes, thereby converting the octanoylated domains into lipoylated derivatives. The sequence is that of Lipoyl synthase from Haemophilus ducreyi (strain 35000HP / ATCC 700724).